The chain runs to 66 residues: uncharacterized protein (66 aa).

This is an uncharacterized protein from Frog virus 3 (isolate Goorha) (FV-3).